The sequence spans 393 residues: 4-hydroxyphenylpyruvate dioxygenase (393 aa).

An N-acetylthreonine modification is found at threonine 2. VOC domains are found at residues 18–152 and 180–338; these read HFHS…KMTF and IIDH…IFTK. Histidine 183 contributes to the Fe cation binding site. 3 positions are modified to phosphoserine: serine 211, serine 226, and serine 250. Positions 266 and 349 each coordinate Fe cation.

This sequence belongs to the 4HPPD family. In terms of assembly, homodimer. The cofactor is Fe cation. As to expression, liver.

It is found in the cytoplasm. The protein localises to the endoplasmic reticulum membrane. It localises to the golgi apparatus membrane. The catalysed reaction is 3-(4-hydroxyphenyl)pyruvate + O2 = homogentisate + CO2. It functions in the pathway amino-acid degradation; L-phenylalanine degradation; acetoacetate and fumarate from L-phenylalanine: step 3/6. In terms of biological role, catalyzes the conversion of 4-hydroxyphenylpyruvic acid to homogentisic acid, one of the steps in tyrosine catabolism. The polypeptide is 4-hydroxyphenylpyruvate dioxygenase (HPD) (Sus scrofa (Pig)).